We begin with the raw amino-acid sequence, 92 residues long: Beta-2-microglobulin (92 aa).

One can recognise an Ig-like C1-type domain in the interval 2 to 91; it reads PQIQVYTRHP…VSMKEPKTVN (90 aa). Residues C22 and C77 are joined by a disulfide bond.

It belongs to the beta-2-microglobulin family. As to quaternary structure, heterodimer of an alpha chain and a beta chain. Beta-2-microglobulin is the beta-chain of major histocompatibility complex class I molecules.

Its subcellular location is the secreted. Its function is as follows. Component of the class I major histocompatibility complex (MHC). Involved in the presentation of peptide antigens to the immune system. The protein is Beta-2-microglobulin (B2m) of Mus caroli (Ryukyu mouse).